The sequence spans 181 residues: Ferritin heavy chain (181 aa).

The 150-residue stretch at 10-159 folds into the Ferritin-like diiron domain; that stretch reads QNYHQDCEAA…DHVTNLRKMG (150 aa). 5 residues coordinate Fe cation: glutamate 27, glutamate 62, histidine 65, glutamate 107, and glutamine 141.

This sequence belongs to the ferritin family. As to quaternary structure, oligomer of 24 subunits. There are two types of subunits: L (light) chain and H (heavy) chain. The major chain can be light or heavy, depending on the species and tissue type. The functional molecule forms a roughly spherical shell with a diameter of 12 nm and contains a central cavity into which the insoluble mineral iron core is deposited. As to expression, expressed in erythroblasts (at protein level). Expressed in heart, liver, spleen, lung, kidney, large intestine, small intestine, muscle, glandular stomach, ovary and oviduct.

It is found in the cytoplasm. The protein localises to the lysosome. It localises to the cytoplasmic vesicle. Its subcellular location is the autophagosome. The catalysed reaction is 4 Fe(2+) + O2 + 4 H(+) = 4 Fe(3+) + 2 H2O. Functionally, stores iron in a soluble, non-toxic, readily available form. Important for iron homeostasis. Has ferroxidase activity. Iron is taken up in the ferrous form and deposited as ferric hydroxides after oxidation. Also plays a role in delivery of iron to cells. Mediates iron uptake in capsule cells of the developing kidney. Delivery to lysosomes is mediated by the cargo receptor NCOA4 for autophagic degradation and release of iron. Its function is as follows. Inhibits translation of various mRNA species in vitro. Associates with a 35S prosome-like particle that contains non-translated mRNAs in a complex with proteins. May be involved in pre-translational regulation of some mRNA. This chain is Ferritin heavy chain, found in Anas platyrhynchos (Mallard).